Reading from the N-terminus, the 460-residue chain is Muscarinic acetylcholine receptor M1 (460 aa).

At Met-1–Pro-22 the chain is on the extracellular side. Asn-2 and Asn-12 each carry an N-linked (GlcNAc...) asparagine glycan. A helical membrane pass occupies residues Trp-23–Ile-48. The Cytoplasmic segment spans residues Ser-49–Tyr-62. A helical membrane pass occupies residues Phe-63–Thr-84. Residues Tyr-85–Thr-95 lie on the Extracellular side of the membrane. Residues Leu-96–Phe-121 traverse the membrane as a helical segment. The cysteines at positions 98 and 178 are disulfide-linked. The Cytoplasmic portion of the chain corresponds to Asp-122–Ala-142. The chain crosses the membrane as a helical span at residues Ala-143–Trp-164. Over Gln-165 to Gln-185 the chain is Extracellular. Residues Pro-186–Trp-209 traverse the membrane as a helical segment. Over Arg-210–Thr-366 the chain is Cytoplasmic. Disordered stretches follow at residues Leu-225 to Cys-259, Ser-273 to Gly-297, and Glu-310 to Lys-351. Thr-230 is modified (phosphothreonine). Over residues Ser-238–Gly-247 the composition is skewed to low complexity. Basic residues predominate over residues Arg-328–Pro-343. Residues Leu-367–Phe-390 traverse the membrane as a helical segment. The Extracellular segment spans residues Cys-391 to Glu-401. A helical transmembrane segment spans residues Leu-402–Leu-420. At Cys-421–Cys-460 the chain is on the cytoplasmic side. Thr-428 is subject to Phosphothreonine. Residue Ser-451 is modified to Phosphoserine. Thr-455 bears the Phosphothreonine mark. At Ser-457 the chain carries Phosphoserine.

This sequence belongs to the G-protein coupled receptor 1 family. Muscarinic acetylcholine receptor subfamily. CHRM1 sub-subfamily. Interacts with GPRASP2. Interacts with TMEM147.

It is found in the cell membrane. Its subcellular location is the postsynaptic cell membrane. The muscarinic acetylcholine receptor mediates various cellular responses, including inhibition of adenylate cyclase, breakdown of phosphoinositides and modulation of potassium channels through the action of G proteins. Primary transducing effect is Pi turnover. The sequence is that of Muscarinic acetylcholine receptor M1 (CHRM1) from Macaca mulatta (Rhesus macaque).